A 165-amino-acid polypeptide reads, in one-letter code: Protein E6 (165 aa).

2 zinc fingers span residues 52–88 and 125–161; these read CNFC…CRVC and CYTC…CRLC.

It belongs to the papillomaviridae E6 protein family. As to quaternary structure, forms homodimers. Interacts with ubiquitin-protein ligase UBE3A/E6-AP; this interaction stimulates UBE3A ubiquitin activity. Interacts with host BAK1.

Its subcellular location is the host cytoplasm. It localises to the host nucleus. Its function is as follows. Plays a major role in the induction and maintenance of cellular transformation. E6 associates with host UBE3A/E6-AP ubiquitin-protein ligase and modulates its activity. Protects host keratinocytes from apoptosis by mediating the degradation of host BAK1. May also inhibit host immune response. This chain is Protein E6, found in Homo sapiens (Human).